Here is a 239-residue protein sequence, read N- to C-terminus: Large ribosomal subunit protein uL1 (239 aa).

It belongs to the universal ribosomal protein uL1 family. As to quaternary structure, part of the 50S ribosomal subunit.

Binds directly to 23S rRNA. The L1 stalk is quite mobile in the ribosome, and is involved in E site tRNA release. Functionally, protein L1 is also a translational repressor protein, it controls the translation of the L11 operon by binding to its mRNA. In Rickettsia conorii (strain ATCC VR-613 / Malish 7), this protein is Large ribosomal subunit protein uL1.